The chain runs to 364 residues: Valine dehydrogenase (364 aa).

Lys-91 is an active-site residue. Gly-191 to His-197 provides a ligand contact to NAD(+).

The protein belongs to the Glu/Leu/Phe/Val dehydrogenases family. Homodimer.

It is found in the cytoplasm. The catalysed reaction is L-valine + NAD(+) + H2O = 3-methyl-2-oxobutanoate + NH4(+) + NADH + H(+). The protein operates within amino-acid degradation; L-valine degradation. With respect to regulation, inhibited by pyridoxal 5'-phosphate (PLP). Functionally, oxidative deamination of branched-chain amino acids. Oxidizes L-valine and L-alpha-aminobutyric acid efficiently, and L-alanine and L-isoleucine less efficiently. D-valine and L-glutamate were not substrates for the enzyme. The catabolism of valine is the major source of fatty acid precursors for macrolide biosynthesis and a vital source of antibiotic precursors. The protein is Valine dehydrogenase of Streptomyces albus (strain ATCC 21838 / DSM 41398 / FERM P-419 / JCM 4703 / NBRC 107858).